Consider the following 215-residue polypeptide: MNIFRLAGDMTHLASVLVLLLKIHTIKSCAGVSLKTQELYAIVFATRYLDIFTSFVSLYNTSMKLVFLGSSFSIVWYMKYHKAVHRTYDREQDTFRHWFLVLPCFLLALLIHEKFTFLEVLWTSSLYLEAVAILPQLVLLQRTRNIDNLTGQYIFLLGGYRGLYILNWIYRYFTEPHFVHWITWIAGFVQTLLYADFFYYYFLSWKNNKKLQLPA.

A run of 6 helical transmembrane segments spans residues 6 to 26, 55 to 77, 98 to 118, 120 to 140, 149 to 169, and 178 to 198; these read LAGDMTHLASVLVLLLKIHTI, FVSLYNTSMKLVFLGSSFSIVWY, WFLVLPCFLLALLIHEKFTFL, VLWTSSLYLEAVAILPQLVLL, LTGQYIFLLGGYRGLYILNWI, and FVHWITWIAGFVQTLLYADFF.

It belongs to the ERD2 family.

The protein resides in the golgi apparatus membrane. It localises to the endoplasmic reticulum membrane. Determines the specificity of the luminal endoplasmic reticulum protein retention system. Required for the retro-transport of calreticulin-3 (CRT3) from the Golgi to the ER. Specifically required for elongation factor Tu receptor (EFR) function in response to the pathogen-associated molecular pattern (PAMP) elf18. The sequence is that of ER lumen protein-retaining receptor B (ERD2B) from Arabidopsis thaliana (Mouse-ear cress).